The sequence spans 400 residues: Nicotinate phosphoribosyltransferase (400 aa).

Histidine 220 is modified (phosphohistidine; by autocatalysis).

This sequence belongs to the NAPRTase family. In terms of processing, transiently phosphorylated on a His residue during the reaction cycle. Phosphorylation strongly increases the affinity for substrates and increases the rate of nicotinate D-ribonucleotide production. Dephosphorylation regenerates the low-affinity form of the enzyme, leading to product release.

It catalyses the reaction nicotinate + 5-phospho-alpha-D-ribose 1-diphosphate + ATP + H2O = nicotinate beta-D-ribonucleotide + ADP + phosphate + diphosphate. It functions in the pathway cofactor biosynthesis; NAD(+) biosynthesis; nicotinate D-ribonucleotide from nicotinate: step 1/1. Functionally, catalyzes the synthesis of beta-nicotinate D-ribonucleotide from nicotinate and 5-phospho-D-ribose 1-phosphate at the expense of ATP. This Salmonella schwarzengrund (strain CVM19633) protein is Nicotinate phosphoribosyltransferase.